The sequence spans 84 residues: UPF0291 protein EUBELI_00985 (84 aa).

It belongs to the UPF0291 family.

It localises to the cytoplasm. The sequence is that of UPF0291 protein EUBELI_00985 from Lachnospira eligens (strain ATCC 27750 / DSM 3376 / VPI C15-48 / C15-B4) (Eubacterium eligens).